Consider the following 446-residue polypeptide: MATATQIFLSPDHAGIARVSECPVGAIEAANHLLQTNHDEHHMFWRPVAGHNHLTHSVLTILALGGGPAELQRAFDDARDIQRPIPPVDRQVVEQLGDPEQFRSRIGQLDQYSNFLAFFSQEIATKGYRAVVDEHCFSGSRNAETLFAQLYEGLYHPVIHLAFGIEFEQPSIVAEALAQVASHDSMGIEAFLMDCEAEATQSAHSGRTLVQLFRDAEADEALRHAAEGFDDGPARVRDGVLGRTARAITALAAQFRVDPQDIEHRLAEMINCSAFITGAVQRTGKPRKIDFFHLHTVTASLSIDILVRQPWISPVVKARLVEWKARVDLVWYTATGAVQLHLPSLLNYMPTSSAGMDWAALYRAVAAVHDDGHLAKLVRALKSGEAVSNPFEKGAGETFPIQGIAWLKLAQMAYDTTVDRPIEQKWIWGIGFDENWTHVLSLESEK.

This sequence belongs to the questin oxidase family.

The catalysed reaction is questin + NADPH + O2 = demethylsulochrin + NADP(+). Its pathway is secondary metabolite biosynthesis. Its function is as follows. Questin oxidase; part of the gene cluster that mediates the biosynthesis of geodin, an intermediate in the biosynthesis of other natural products. The pathway begins with the synthesis of atrochrysone thioester by the polyketide synthase (PKS) gedC. The atrochrysone carboxyl ACP thioesterase gedB then breaks the thioester bond and releases the atrochrysone carboxylic acid from gedC. The atrochrysone carboxylic acid is then converted to atrochrysone which is further transformed into emodinanthrone. The next step is performed by the emodinanthrone oxygenase gedH that catalyzes the oxidation of emodinanthrone to emodin. Emodin O-methyltransferase encoded probably by gedA then catalyzes methylation of the 8-hydroxy group of emodin to form questin. Ring cleavage of questin by questin oxidase gedK leads to desmethylsulochrin via several intermediates including questin epoxide. Another methylation step probably catalyzed by methyltransferase gedG leads to the formation of sulochrin which is further converted to dihydrogeodin by the sulochrin halogenase gedL. Finally, the dihydrogeodin oxidase gedJ catalyzes the stereospecific phenol oxidative coupling reaction converting dihydrogeodin to geodin. This chain is Questin oxidase, found in Aspergillus terreus (strain NIH 2624 / FGSC A1156).